Consider the following 230-residue polypeptide: Demethylmenaquinone methyltransferase (230 aa).

Residues threonine 62, aspartate 80, 100–101 (DG), and serine 117 contribute to the S-adenosyl-L-methionine site.

This sequence belongs to the class I-like SAM-binding methyltransferase superfamily. MenG/UbiE family.

The enzyme catalyses a 2-demethylmenaquinol + S-adenosyl-L-methionine = a menaquinol + S-adenosyl-L-homocysteine + H(+). It functions in the pathway quinol/quinone metabolism; menaquinone biosynthesis; menaquinol from 1,4-dihydroxy-2-naphthoate: step 2/2. Functionally, methyltransferase required for the conversion of demethylmenaquinol (DMKH2) to menaquinol (MKH2). This Corynebacterium efficiens (strain DSM 44549 / YS-314 / AJ 12310 / JCM 11189 / NBRC 100395) protein is Demethylmenaquinone methyltransferase.